The sequence spans 226 residues: UPF0758 protein SPD_0975 (226 aa).

The MPN domain maps to 103-225 (SILSSQKLAK…YFSYREKTDL (123 aa)). Positions 174, 176, and 187 each coordinate Zn(2+). The JAMM motif signature appears at 174–187 (HNHPSGAVAPSQND).

Belongs to the UPF0758 family.

This chain is UPF0758 protein SPD_0975, found in Streptococcus pneumoniae serotype 2 (strain D39 / NCTC 7466).